Reading from the N-terminus, the 226-residue chain is MHLLIAAAGSGRRMGADRNKLLLPLAGKPVIAWTLKAALAAEHIQWIGVVGQEIDREPILDLVRDANKPVTWIQGGSTRQESVLRGLAGLPEAAEQVLIHDGARCLAEPALFDRCAMALASGQALIAATPVTDTIKRVDADGVITDTPDRSELWAAQTPQGFQVDQLRHGHAEAEANGWTVTDDASLYERLGWPVQVLDAGPSNIKVTTPFDLNVAEAVLALRQQD.

This sequence belongs to the IspD/TarI cytidylyltransferase family. IspD subfamily.

It catalyses the reaction 2-C-methyl-D-erythritol 4-phosphate + CTP + H(+) = 4-CDP-2-C-methyl-D-erythritol + diphosphate. The protein operates within isoprenoid biosynthesis; isopentenyl diphosphate biosynthesis via DXP pathway; isopentenyl diphosphate from 1-deoxy-D-xylulose 5-phosphate: step 2/6. Functionally, catalyzes the formation of 4-diphosphocytidyl-2-C-methyl-D-erythritol from CTP and 2-C-methyl-D-erythritol 4-phosphate (MEP). The protein is 2-C-methyl-D-erythritol 4-phosphate cytidylyltransferase of Parasynechococcus marenigrum (strain WH8102).